The sequence spans 226 residues: Small ribosomal subunit protein uS3 (226 aa).

The KH type-2 domain occupies 36–104 (IRKYLENRLS…KIQINIFEIK (69 aa)).

This sequence belongs to the universal ribosomal protein uS3 family. As to quaternary structure, part of the 30S ribosomal subunit. Forms a tight complex with proteins S10 and S14.

Functionally, binds the lower part of the 30S subunit head. Binds mRNA in the 70S ribosome, positioning it for translation. This is Small ribosomal subunit protein uS3 from Karelsulcia muelleri (strain GWSS) (Sulcia muelleri).